Reading from the N-terminus, the 110-residue chain is UPF0122 protein BPUM_1495 (110 aa).

The protein belongs to the UPF0122 family.

Might take part in the signal recognition particle (SRP) pathway. This is inferred from the conservation of its genetic proximity to ftsY/ffh. May be a regulatory protein. This chain is UPF0122 protein BPUM_1495, found in Bacillus pumilus (strain SAFR-032).